The primary structure comprises 262 residues: Pyridoxine 5'-phosphate synthase (262 aa).

Asn-6 contacts 3-amino-2-oxopropyl phosphate. 8–9 is a binding site for 1-deoxy-D-xylulose 5-phosphate; it reads DH. Position 17 (Arg-17) interacts with 3-amino-2-oxopropyl phosphate. The Proton acceptor role is filled by His-43. 1-deoxy-D-xylulose 5-phosphate contacts are provided by Arg-45 and His-50. Glu-70 serves as the catalytic Proton acceptor. Residue Thr-102 participates in 1-deoxy-D-xylulose 5-phosphate binding. His-215 serves as the catalytic Proton donor. Residues Gly-216 and 237-238 contribute to the 3-amino-2-oxopropyl phosphate site; that span reads GH.

It belongs to the PNP synthase family. Homooctamer; tetramer of dimers.

It is found in the cytoplasm. It carries out the reaction 3-amino-2-oxopropyl phosphate + 1-deoxy-D-xylulose 5-phosphate = pyridoxine 5'-phosphate + phosphate + 2 H2O + H(+). It participates in cofactor biosynthesis; pyridoxine 5'-phosphate biosynthesis; pyridoxine 5'-phosphate from D-erythrose 4-phosphate: step 5/5. In terms of biological role, catalyzes the complicated ring closure reaction between the two acyclic compounds 1-deoxy-D-xylulose-5-phosphate (DXP) and 3-amino-2-oxopropyl phosphate (1-amino-acetone-3-phosphate or AAP) to form pyridoxine 5'-phosphate (PNP) and inorganic phosphate. This is Pyridoxine 5'-phosphate synthase from Helicobacter pylori (strain ATCC 700392 / 26695) (Campylobacter pylori).